A 542-amino-acid chain; its full sequence is Membrane protein insertase YidC (542 aa).

6 helical membrane-spanning segments follow: residues N6–D26, L326–F346, F350–Y370, G421–L441, L458–M478, and V501–G521.

The protein belongs to the OXA1/ALB3/YidC family. Type 1 subfamily. As to quaternary structure, interacts with the Sec translocase complex via SecD. Specifically interacts with transmembrane segments of nascent integral membrane proteins during membrane integration.

Its subcellular location is the cell inner membrane. Required for the insertion and/or proper folding and/or complex formation of integral membrane proteins into the membrane. Involved in integration of membrane proteins that insert both dependently and independently of the Sec translocase complex, as well as at least some lipoproteins. Aids folding of multispanning membrane proteins. The sequence is that of Membrane protein insertase YidC from Shewanella loihica (strain ATCC BAA-1088 / PV-4).